Reading from the N-terminus, the 333-residue chain is D-glutamate N-acetyltransferase (333 aa).

This sequence belongs to the N-acetyltransferase DgcN family.

It catalyses the reaction D-glutamate + acetyl-CoA = N-acetyl-D-glutamate + CoA + H(+). It functions in the pathway amino-acid degradation. Functionally, N-acetyltransferase involved in a deamination-independent D-glutamate degradation pathway, named the DgcN-DgcA pathway. Catalyzes the transfer of the acetyl moiety from acetyl-CoA to D-glutamate to generate N-acetyl-D-glutamate. This is D-glutamate N-acetyltransferase from Tritonibacter scottomollicae (Epibacterium scottomollicae).